The chain runs to 494 residues: UPF0371 protein str1377 (494 aa).

It belongs to the UPF0371 family.

The polypeptide is UPF0371 protein str1377 (Streptococcus thermophilus (strain CNRZ 1066)).